Consider the following 162-residue polypeptide: MNSRKLFSKLKEESYDVSIFDLMNAKVYLEKDMTYLPEDYKKGYLEDFFTFFPEVLREIKNKTEEEIEDFEIDEEEIKKVDLRLCSMGSKKMGRNSYEKLVKTVINYLIFINKRPLHALTTRFPGGKQIIEKNGNYYCPIKNAQSNELSICEFCICKDLNEL.

The protein belongs to the UPF0305 family.

The chain is UPF0305 protein MmarC7_1691 from Methanococcus maripaludis (strain C7 / ATCC BAA-1331).